We begin with the raw amino-acid sequence, 289 residues long: uncharacterized protein (289 aa).

Residue Glu48 is part of the active site.

Belongs to the PhzF family.

This is an uncharacterized protein from Pasteurella multocida (strain Pm70).